The primary structure comprises 341 residues: Homeobox protein mls-2 (341 aa).

Disordered stretches follow at residues 1 to 78 (MPTS…DSTN) and 139 to 209 (SNPD…TVFS). Positions 64–78 (TTQSSPSASSEDSTN) are enriched in polar residues. Positions 153–166 (KDEKSEGKDGETRD) are enriched in basic and acidic residues. The segment at residues 201–260 (KKKTRTVFSRSQVSQLEMMFECKRYLSSQERSNLAQKLHLTETQVKIWFQNRRNKFKRQA) is a DNA-binding region (homeobox).

This sequence belongs to the HMX homeobox family. As to expression, expressed in a subset of head neurons, including AIM and ASK (at protein level).

Its subcellular location is the nucleus. Transcription factor that binds to the promoter of target genes. Regulates fate specification and/or differentiation of multiple cell types arising from the embryonic mesodermal (M) lineage and the ABp(l/r)paa precursors. In the postembryonic M lineage, regulates cleavage orientation, cell proliferation and cell fate specification. Regulates hlh-1 expression to specify coelomocyte fate in the mesodermal (M) lineage. In AWC neurons, initiates expression of ceh-36, leading to the expression of terminal differentiation genes. Regulates ventral cephalic sheath (CEPsh) glia differentiation and expression of transcription factor hlh-17 in CEPsh glia. Promotes terminal differentiation and morphogenesis of the epithelial duct and pore cells. In the duct cell, cooperates with the EGF-Ras-ERK pathway in turning on the terminal differentiation gene lin-48. The protein is Homeobox protein mls-2 of Caenorhabditis elegans.